Reading from the N-terminus, the 359-residue chain is Hereditary hemochromatosis protein homolog (359 aa).

Positions 1–24 are cleaved as a signal peptide; sequence MSLSAGLPVRPLLLLLLLLWSVAP. The interval 25 to 126 is alpha-1; it reads QALPPRSHSL…KVTKLGVVSE (102 aa). At 25 to 318 the chain is on the extracellular side; the sequence is QALPPRSHSL…WEPLQSQAMI (294 aa). 4 N-linked (GlcNAc...) asparagine glycosylation sites follow: asparagine 114, asparagine 142, asparagine 166, and asparagine 246. The alpha-2 stretch occupies residues 127–217; that stretch reads SHILQVVLGC…ELGRGVLGQQ (91 aa). 2 cysteine pairs are disulfide-bonded: cysteine 136–cysteine 199 and cysteine 237–cysteine 294. An alpha-3 region spans residues 218–309; sequence VPTLVKVTRH…GLDQPLTASW (92 aa). In terms of domain architecture, Ig-like C1-type spans 219 to 308; the sequence is PTLVKVTRHW…PGLDQPLTAS (90 aa). Residues 310 to 318 form a connecting peptide region; that stretch reads EPLQSQAMI. Residues 319–339 form a helical membrane-spanning segment; that stretch reads IGIISGVTVCAIFLVGILFLI. At 340–359 the chain is on the cytoplasmic side; sequence LRKRKASGGTMGGYVLTDCE.

Belongs to the MHC class I family. As to quaternary structure, binds TFR through the extracellular domain in a pH-dependent manner.

It is found in the cell membrane. Binds to transferrin receptor (TFR) and reduces its affinity for iron-loaded transferrin. In Mus musculus (Mouse), this protein is Hereditary hemochromatosis protein homolog (Hfe).